A 554-amino-acid polypeptide reads, in one-letter code: Glucose-6-phosphate isomerase (554 aa).

E359 functions as the Proton donor in the catalytic mechanism. Catalysis depends on residues H390 and K518.

The protein belongs to the GPI family.

The protein localises to the cytoplasm. It carries out the reaction alpha-D-glucose 6-phosphate = beta-D-fructose 6-phosphate. It functions in the pathway carbohydrate biosynthesis; gluconeogenesis. Its pathway is carbohydrate degradation; glycolysis; D-glyceraldehyde 3-phosphate and glycerone phosphate from D-glucose: step 2/4. Catalyzes the reversible isomerization of glucose-6-phosphate to fructose-6-phosphate. The polypeptide is Glucose-6-phosphate isomerase (Pseudomonas fluorescens (strain Pf0-1)).